Consider the following 966-residue polypeptide: Aminopeptidase N (966 aa).

The Cytoplasmic portion of the chain corresponds to 1 to 8 (MAKGFYIS). A helical; Signal-anchor for type II membrane protein membrane pass occupies residues 9–32 (KSLGILGILLGVAALCTIVALSVV). The segment at 33 to 65 (YRQEKNKNTSQSPSMAPLNPTATSSPATTLDQN) is cytosolic Ser/Thr-rich junction. Residues 33-966 (YRQEKNKNTS…VLAWFTANSA (934 aa)) lie on the Extracellular side of the membrane. N-linked (GlcNAc...) asparagine glycans are attached at residues Asn40 and Asn125. The disordered stretch occupies residues 40–61 (NTSQSPSMAPLNPTATSSPATT). The interval 66–966 (LPWNRYRLPK…VLAWFTANSA (901 aa)) is metalloprotease. Sulfotyrosine is present on Tyr173. Asn259 and Asn315 each carry an N-linked (GlcNAc...) asparagine glycan. Position 348–352 (348–352 (GAMEN)) interacts with substrate. His384 is a binding site for Zn(2+). The active-site Proton acceptor is the Glu385. Positions 388 and 407 each coordinate Zn(2+). Residues Tyr415 and Tyr420 each carry the sulfotyrosine modification. N-linked (GlcNAc...) asparagine glycosylation is found at Asn552, Asn570, Asn624, and Asn734. 2 disulfides stabilise this stretch: Cys760–Cys767 and Cys797–Cys833. N-linked (GlcNAc...) asparagine glycosylation occurs at Asn817. Tyr852 carries the phosphotyrosine modification. Sulfotyrosine is present on Tyr912.

It belongs to the peptidase M1 family. As to quaternary structure, homodimer. Interacts with SLC6A19. The cofactor is Zn(2+). Sulfated. In terms of processing, N- and O-glycosylated. Post-translationally, may undergo proteolysis and give rise to a soluble form.

It localises to the cell membrane. The catalysed reaction is Release of an N-terminal amino acid, Xaa-|-Yaa- from a peptide, amide or arylamide. Xaa is preferably Ala, but may be most amino acids including Pro (slow action). When a terminal hydrophobic residue is followed by a prolyl residue, the two may be released as an intact Xaa-Pro dipeptide.. In terms of biological role, broad specificity aminopeptidase which plays a role in the final digestion of peptides generated from hydrolysis of proteins by gastric and pancreatic proteases. Also involved in the processing of various peptides including peptide hormones, such as angiotensin III and IV, neuropeptides, and chemokines. May also be involved the cleavage of peptides bound to major histocompatibility complex class II molecules of antigen presenting cells. May have a role in angiogenesis and promote cholesterol crystallization. May have a role in amino acid transport by acting as binding partner of amino acid transporter SLC6A19 and regulating its activity. This chain is Aminopeptidase N (ANPEP), found in Oryctolagus cuniculus (Rabbit).